A 357-amino-acid polypeptide reads, in one-letter code: Biotin synthase (357 aa).

A Radical SAM core domain is found at N41–R268. C56, C60, and C63 together coordinate [4Fe-4S] cluster. C100, C131, C191, and R263 together coordinate [2Fe-2S] cluster.

Belongs to the radical SAM superfamily. Biotin synthase family. In terms of assembly, homodimer. [4Fe-4S] cluster serves as cofactor. [2Fe-2S] cluster is required as a cofactor.

It catalyses the reaction (4R,5S)-dethiobiotin + (sulfur carrier)-SH + 2 reduced [2Fe-2S]-[ferredoxin] + 2 S-adenosyl-L-methionine = (sulfur carrier)-H + biotin + 2 5'-deoxyadenosine + 2 L-methionine + 2 oxidized [2Fe-2S]-[ferredoxin]. Its pathway is cofactor biosynthesis; biotin biosynthesis; biotin from 7,8-diaminononanoate: step 2/2. Its function is as follows. Catalyzes the conversion of dethiobiotin (DTB) to biotin by the insertion of a sulfur atom into dethiobiotin via a radical-based mechanism. The sequence is that of Biotin synthase from Shewanella denitrificans (strain OS217 / ATCC BAA-1090 / DSM 15013).